The chain runs to 235 residues: NAD(P)H-quinone oxidoreductase subunit K, chloroplastic (235 aa).

Positions 43, 44, 108, and 139 each coordinate [4Fe-4S] cluster.

It belongs to the complex I 20 kDa subunit family. In terms of assembly, NDH is composed of at least 16 different subunits, 5 of which are encoded in the nucleus. The cofactor is [4Fe-4S] cluster.

It is found in the plastid. Its subcellular location is the chloroplast thylakoid membrane. The catalysed reaction is a plastoquinone + NADH + (n+1) H(+)(in) = a plastoquinol + NAD(+) + n H(+)(out). The enzyme catalyses a plastoquinone + NADPH + (n+1) H(+)(in) = a plastoquinol + NADP(+) + n H(+)(out). NDH shuttles electrons from NAD(P)H:plastoquinone, via FMN and iron-sulfur (Fe-S) centers, to quinones in the photosynthetic chain and possibly in a chloroplast respiratory chain. The immediate electron acceptor for the enzyme in this species is believed to be plastoquinone. Couples the redox reaction to proton translocation, and thus conserves the redox energy in a proton gradient. This chain is NAD(P)H-quinone oxidoreductase subunit K, chloroplastic, found in Ipomoea purpurea (Common morning glory).